Here is a 720-residue protein sequence, read N- to C-terminus: NADH-ubiquinone oxidoreductase 78 kDa subunit, mitochondrial (720 aa).

The transit peptide at 1–23 directs the protein to the mitochondrion; the sequence is MNSIKSHILRSSKRYISASSKRL. A 2Fe-2S ferredoxin-type domain is found at 24–102; it reads AEVEVTVDGR…GMVVHTDSER (79 aa). [2Fe-2S] cluster is bound by residues C58, C69, C72, and C86. The 4Fe-4S His(Cys)3-ligated-type domain occupies 102–141; it reads RIKKAREGVTEMLLENHPLDCPVCDQGGECDLQEQSQRYG. In terms of domain architecture, 4Fe-4S Mo/W bis-MGD-type spans 241–297; sequence LKRTETIDVLDAVGSNIRVDTRGIEVMRVLPRLNDDVNEEWISDKTRFACDGLKTQR.

It belongs to the complex I 75 kDa subunit family. Core subunit of respiratory chain NADH dehydrogenase (Complex I) which is composed of 45 different subunits. This is the largest subunit of complex I and it is a component of the iron-sulfur (IP) fragment of the enzyme. It depends on [2Fe-2S] cluster as a cofactor. The cofactor is [4Fe-4S] cluster.

The protein localises to the mitochondrion. The enzyme catalyses a ubiquinone + NADH + 5 H(+)(in) = a ubiquinol + NAD(+) + 4 H(+)(out). Its function is as follows. Core subunit of the mitochondrial membrane respiratory chain NADH dehydrogenase (Complex I) which catalyzes electron transfer from NADH through the respiratory chain, using ubiquinone as an electron acceptor. Essential for catalysing the entry and efficient transfer of electrons within complex I. Plays a key role in the assembly and stability of complex I and participates in the association of complex I with ubiquinol-cytochrome reductase complex (Complex III) to form supercomplexes. Plays a role in cell wall integrity and is involved in osmotic and oxidative resistance, yeast to hypha transition, and the ability to damage and invade oral epithelial cells. This chain is NADH-ubiquinone oxidoreductase 78 kDa subunit, mitochondrial, found in Candida albicans (strain SC5314 / ATCC MYA-2876) (Yeast).